The primary structure comprises 126 residues: Defensin-like protein 183 (126 aa).

The signal sequence occupies residues 1 to 26 (MEKALSLVVFIIFSIMLASVENKVNA). Intrachain disulfides connect C29–C68, C36–C55, C39–C62, C43–C64, C80–C126, C91–C111, C96–C120, and C100–C122.

This sequence belongs to the DEFL family.

It is found in the secreted. This Arabidopsis thaliana (Mouse-ear cress) protein is Defensin-like protein 183 (LCR19).